The sequence spans 147 residues: uncharacterized protein (147 aa).

This is an uncharacterized protein from Homo sapiens (Human).